The chain runs to 289 residues: Glycine--tRNA ligase alpha subunit (289 aa).

The protein belongs to the class-II aminoacyl-tRNA synthetase family. As to quaternary structure, tetramer of two alpha and two beta subunits.

The protein localises to the cytoplasm. It carries out the reaction tRNA(Gly) + glycine + ATP = glycyl-tRNA(Gly) + AMP + diphosphate. This chain is Glycine--tRNA ligase alpha subunit, found in Nitratidesulfovibrio vulgaris (strain ATCC 29579 / DSM 644 / CCUG 34227 / NCIMB 8303 / VKM B-1760 / Hildenborough) (Desulfovibrio vulgaris).